The sequence spans 453 residues: GTPase Der (453 aa).

EngA-type G domains lie at 3 to 167 (PIIV…INSK) and 188 to 361 (VKIA…HTSQ). GTP is bound by residues 9–16 (GRTNVGKS), 57–61 (DTAGI), 119–122 (NKID), 194–201 (GKPNVGKS), 241–245 (DTAGM), and 306–309 (NKCD). The 85-residue stretch at 362–446 (KKIKTSQVMK…PIKIQFKETM (85 aa)) folds into the KH-like domain.

The protein belongs to the TRAFAC class TrmE-Era-EngA-EngB-Septin-like GTPase superfamily. EngA (Der) GTPase family. As to quaternary structure, associates with the 50S ribosomal subunit.

In terms of biological role, GTPase that plays an essential role in the late steps of ribosome biogenesis. The polypeptide is GTPase Der (Buchnera aphidicola subsp. Schizaphis graminum (strain Sg)).